A 151-amino-acid polypeptide reads, in one-letter code: uncharacterized protein (151 aa).

3 consecutive transmembrane segments (helical) span residues 14–34 (GAAL…YWLI), 45–65 (ISLV…GYLI), and 91–111 (VIVA…ASLI).

The protein resides in the cell membrane. This is an uncharacterized protein from Bacillus subtilis (strain 168).